The following is a 187-amino-acid chain: UPF0200 protein MM_1313 (187 aa).

Residue 9-16 (GMPASGKS) coordinates ATP.

The protein belongs to the UPF0200 family.

This is UPF0200 protein MM_1313 from Methanosarcina mazei (strain ATCC BAA-159 / DSM 3647 / Goe1 / Go1 / JCM 11833 / OCM 88) (Methanosarcina frisia).